The chain runs to 583 residues: Complement factor I (583 aa).

An N-terminal signal peptide occupies residues 1–18 (MKLLHVFLLFLCFHLRFC). 17 disulfides stabilise this stretch: Cys33-Cys255, Cys43-Cys54, Cys48-Cys59, Cys61-Cys93, Cys67-Cys86, Cys75-Cys106, Cys141-Cys181, Cys154-Cys214, Cys186-Cys196, Cys229-Cys247, Cys241-Cys256, Cys259-Cys271, Cys266-Cys284, Cys278-Cys293, Cys327-Cys453, Cys365-Cys381, and Cys373-Cys444. The Kazal-like domain occupies 55–108 (IEGTCVCKLPYQCPKNGTAVCATNRRSFPTYCQQKSLECLHPGTKFLNNGTCTA). Asn70 is a glycosylation site (N-linked (GlcNAc...) asparagine). The N-linked (GlcNAc...) (complex) asparagine glycan is linked to Asn103. The SRCR domain maps to 114 to 212 (VSLKHGNTDS…TMGYQDFADV (99 aa)). Residue Asn177 is glycosylated (N-linked (GlcNAc...) asparagine). LDL-receptor class A domains lie at 213–257 (VCYT…LCCK) and 258–294 (ACQG…VGCA). Lys239, Asp242, Ile244, Asp246, Asp252, and Glu253 together coordinate Ca(2+). Residues Tyr276, Asn279, Glu281, Asp283, Asp289, and Glu290 each contribute to the Ca(2+) site. A Peptidase S1 domain is found at 340–574 (IVGGKRAQLG…YFDWISYHVG (235 aa)). Active-site charge relay system residues include His380 and Asp429. Asn464 and Asn494 each carry an N-linked (GlcNAc...) asparagine glycan. 3 cysteine pairs are disulfide-bonded: Cys467–Cys531, Cys495–Cys510, and Cys521–Cys550. Ser525 serves as the catalytic Charge relay system. N-linked (GlcNAc...) asparagine glycosylation occurs at Asn536.

Belongs to the peptidase S1 family. In terms of assembly, heterodimer of a light and heavy chains; disulfide-linked. The fully processed and mature protein circulates as a zymogen, and is allosterically activated by substrate-induced remodeling of the active site. Interacts with C3b. Interacts with complement factor H. (Microbial infection) Interacts with Staphylococcus aureus clumping factor A/ClfA; this interaction enhances cleavage of C3b into iC3b by CFI. Expressed in the liver by hepatocytes. Also present in other cells such as monocytes, fibroblasts or keratinocytes.

Its subcellular location is the secreted. It localises to the extracellular space. The catalysed reaction is Inactivates complement subcomponents C3b, iC3b and C4b by proteolytic cleavage.. Trypsin-like serine protease that plays an essential role in regulating the immune response by controlling all complement pathways. Inhibits these pathways by cleaving three peptide bonds in the alpha-chain of C3b and two bonds in the alpha-chain of C4b thereby inactivating these proteins. Essential cofactors for these reactions include factor H and C4BP in the fluid phase and membrane cofactor protein/CD46 and CR1 on cell surfaces. The presence of these cofactors on healthy cells allows degradation of deposited C3b by CFI in order to prevent undesired complement activation, while in apoptotic cells or microbes, the absence of such cofactors leads to C3b-mediated complement activation and subsequent opsonization. The protein is Complement factor I (CFI) of Homo sapiens (Human).